Here is a 141-residue protein sequence, read N- to C-terminus: MAKKVTGIVKLALNAGKATPAPPVGPALGQHGVNIVMFCKEYNARTADKSGLVIPVEISIYEDRSFTFILKTPPASVLIAKAAGLNKGSGEPNTKKVGSITNKQLESIAETKLPDLNTNNIPQAMKIVGGTAKNMGILIKD.

This sequence belongs to the universal ribosomal protein uL11 family. As to quaternary structure, part of the ribosomal stalk of the 50S ribosomal subunit. Interacts with L10 and the large rRNA to form the base of the stalk. L10 forms an elongated spine to which L12 dimers bind in a sequential fashion forming a multimeric L10(L12)X complex.

Its subcellular location is the plastid. It localises to the chloroplast. In terms of biological role, forms part of the ribosomal stalk which helps the ribosome interact with GTP-bound translation factors. This Pyropia yezoensis (Susabi-nori) protein is Large ribosomal subunit protein uL11c.